The primary structure comprises 130 residues: MAENQYYGTGRRKSSAARVFIKPGNGKIVINQRSLEQYFGRETARMVVRQPMELVDMVEKLDLYITVKGGGISGQAGAIRHGITRALMEYDESLRSELRKAGFVTRDARQVERKKVGLRKARRRPQFSKR.

This sequence belongs to the universal ribosomal protein uS9 family.

This is Small ribosomal subunit protein uS9 (rpsI) from Shigella flexneri.